We begin with the raw amino-acid sequence, 786 residues long: Keratin, type I cytoskeletal 9 (786 aa).

The segment at 1–21 (MNCRQFLSSHCSRDSSGGGGG) is disordered. The interval 1-136 (MNCRQFLSSH…SGAGGILGAD (136 aa)) is head. Serine 52 carries the post-translational modification Phosphoserine. The interval 137–172 (EKTTMQDLNSRLASYLDKVQALEDANKELESKIREW) is coil 1A. An IF rod domain is found at 137–449 (EKTTMQDLNS…SLLEGGQEDF (313 aa)). Residues 173–191 (YDKQGSRTFHRDYSPYYDT) are linker 1. The tract at residues 192-283 (IEDLKNQIVN…KNHEDEMSQL (92 aa)) is coil 1B. Residues 284–306 (TGQNSGDVNVEMNAAPGRDLTKI) are linker 12. The coil 2 stretch occupies residues 307–445 (LNDMREEYER…KTYRSLLEGG (139 aa)). A tail region spans residues 446-760 (QEDFESHESG…GGGSGSKGGS (315 aa)). The segment at 447–786 (EDFESHESGQ…DDTQGYHIQY (340 aa)) is disordered. Composition is skewed to gly residues over residues 460–657 (GSGG…GGSG) and 664–761 (SSSG…GGSG). The span at 762–773 (RSSQVQSSSSKS) shows a compositional bias: low complexity.

Belongs to the intermediate filament family. In terms of assembly, heterotetramer of two type I and two type II keratins.

Its function is as follows. May serve an important special function either in the mature palmar and plantar skin tissue or in the morphogenetic program of the formation of these tissues. Plays a role in keratin filament assembly. This Canis lupus familiaris (Dog) protein is Keratin, type I cytoskeletal 9.